The chain runs to 37 residues: Large ribosomal subunit protein bL36 (37 aa).

It belongs to the bacterial ribosomal protein bL36 family.

This Mycoplasmopsis synoviae (strain 53) (Mycoplasma synoviae) protein is Large ribosomal subunit protein bL36.